Consider the following 158-residue polypeptide: Pyruvoyl-dependent arginine decarboxylase (158 aa).

Ser44 is subject to Pyruvic acid (Ser).

The protein belongs to the PdaD family. The cofactor is pyruvate.

It catalyses the reaction L-arginine + H(+) = agmatine + CO2. In Pyrococcus horikoshii (strain ATCC 700860 / DSM 12428 / JCM 9974 / NBRC 100139 / OT-3), this protein is Pyruvoyl-dependent arginine decarboxylase.